The primary structure comprises 540 residues: ATP-dependent RNA helicase DBP5 (540 aa).

2 stretches are compositionally biased toward basic and acidic residues: residues 24–36 (KSGE…KKGS) and 50–119 (KEGD…EPKE). The interval 24–124 (KSGEKLEEIK…KEPKEPATNL (101 aa)) is disordered. The short motif at 150 to 178 (KSFEELGLSPELLKGLYAMKFNKPSKIQE) is the Q motif element. Residues 183–350 (LLLSNPPRNM…ERLVPDANSL (168 aa)) enclose the Helicase ATP-binding domain. Position 196–203 (196–203 (SQSGTGKT)) interacts with ATP. Residues 297–300 (DEAD) carry the DEAD box motif. Residues 361–538 (GIKQLYMDCR…EVEKIVKKVI (178 aa)) form the Helicase C-terminal domain.

Belongs to the DEAD box helicase family. DDX19/DBP5 subfamily. In terms of assembly, associates with the nuclear pore complex.

The protein localises to the cytoplasm. The protein resides in the nucleus. It localises to the nuclear pore complex. Its subcellular location is the nucleus membrane. The catalysed reaction is ATP + H2O = ADP + phosphate + H(+). Its function is as follows. ATP-dependent RNA helicase associated with the nuclear pore complex and essential for mRNA export from the nucleus. May participate in a terminal step of mRNA export through the removal of proteins that accompany mRNA through the nucleopore complex. May also be involved in early transcription. The protein is ATP-dependent RNA helicase DBP5 (DBP5) of Candida albicans (strain SC5314 / ATCC MYA-2876) (Yeast).